A 373-amino-acid polypeptide reads, in one-letter code: GTP cyclohydrolase 1 type 2 homolog (373 aa).

His-67, His-68, Asp-106, His-333, and Glu-336 together coordinate a divalent metal cation.

Belongs to the GTP cyclohydrolase I type 2/NIF3 family. As to quaternary structure, homohexamer.

This Listeria monocytogenes serovar 1/2a (strain ATCC BAA-679 / EGD-e) protein is GTP cyclohydrolase 1 type 2 homolog.